Reading from the N-terminus, the 212-residue chain is Glycerol-3-phosphate acyltransferase (212 aa).

6 consecutive transmembrane segments (helical) span residues 8 to 28 (IFLS…PFAV), 59 to 79 (AAAA…LWLA), 90 to 110 (VFAL…FLGF), 122 to 142 (ILLA…VIIA), 148 to 168 (SSLA…FGSG), and 169 to 189 (VAWY…LLLF).

Belongs to the PlsY family. In terms of assembly, probably interacts with PlsX.

It is found in the cell inner membrane. The enzyme catalyses an acyl phosphate + sn-glycerol 3-phosphate = a 1-acyl-sn-glycero-3-phosphate + phosphate. It functions in the pathway lipid metabolism; phospholipid metabolism. Its function is as follows. Catalyzes the transfer of an acyl group from acyl-phosphate (acyl-PO(4)) to glycerol-3-phosphate (G3P) to form lysophosphatidic acid (LPA). This enzyme utilizes acyl-phosphate as fatty acyl donor, but not acyl-CoA or acyl-ACP. This is Glycerol-3-phosphate acyltransferase from Bordetella petrii (strain ATCC BAA-461 / DSM 12804 / CCUG 43448).